The chain runs to 49 residues: Large ribosomal subunit protein bL33 (49 aa).

It belongs to the bacterial ribosomal protein bL33 family.

The polypeptide is Large ribosomal subunit protein bL33 (Alkaliphilus oremlandii (strain OhILAs) (Clostridium oremlandii (strain OhILAs))).